The primary structure comprises 164 residues: Siroheme decarboxylase alpha subunit (164 aa).

The protein belongs to the Ahb/Nir family. As to quaternary structure, forms a heterodimer composed of AhbA and AhbB.

The enzyme catalyses siroheme + 2 H(+) = 12,18-didecarboxysiroheme + 2 CO2. Its pathway is porphyrin-containing compound metabolism; protoheme biosynthesis. Functionally, involved in siroheme-dependent heme b biosynthesis. Catalyzes the decarboxylation of siroheme into didecarboxysiroheme. The protein is Siroheme decarboxylase alpha subunit of Oleidesulfovibrio alaskensis (strain ATCC BAA-1058 / DSM 17464 / G20) (Desulfovibrio alaskensis).